We begin with the raw amino-acid sequence, 730 residues long: Elongation factor 2 (730 aa).

Positions 18–238 constitute a tr-type G domain; that stretch reads DQIRNFGVIA…YSEGKVDELV (221 aa). Residues 27–34, 93–97, and 147–150 contribute to the GTP site; these read AHVDHGKT, DTPGH, and NKVD. Histidine 595 carries the post-translational modification Diphthamide. The interval 711–730 is disordered; it reads RKRKGLAPDPPTVSEFIDRE.

Belongs to the TRAFAC class translation factor GTPase superfamily. Classic translation factor GTPase family. EF-G/EF-2 subfamily.

It is found in the cytoplasm. Catalyzes the GTP-dependent ribosomal translocation step during translation elongation. During this step, the ribosome changes from the pre-translocational (PRE) to the post-translocational (POST) state as the newly formed A-site-bound peptidyl-tRNA and P-site-bound deacylated tRNA move to the P and E sites, respectively. Catalyzes the coordinated movement of the two tRNA molecules, the mRNA and conformational changes in the ribosome. The chain is Elongation factor 2 from Cenarchaeum symbiosum (strain A).